Here is a 46-residue protein sequence, read N- to C-terminus: U-myrmeciitoxin(01)-Mg6a (46 aa).

Positions 1-20 (MNLKTFCFFLLGIFVTLTVT) are cleaved as a signal peptide. A propeptide spanning residues 21 to 33 (VIPIANADAEADT) is cleaved from the precursor.

Post-translationally, contains 1 disulfide bond. Expressed by the venom gland.

The protein resides in the secreted. This chain is U-myrmeciitoxin(01)-Mg6a, found in Myrmecia gulosa (Red bulldog ant).